The chain runs to 151 residues: MTVMIKKIARKKCIHVMLVYTGGCNACDIEVVNAIFSPFYDAEQYNVFLTFNPREADILVVTGCVTKVVAESLRKIYEKIPEPKAVVAVGACALMGGVYKNIGGDLGTSDFVAGPVENIIPVDVKVPGCAPRPEDIIAGIVKALPKVIEGK.

[4Fe-4S] cluster contacts are provided by Cys24, Cys27, Cys92, and Cys129.

Belongs to the complex I 20 kDa subunit family. [4Fe-4S] cluster is required as a cofactor.

This is an uncharacterized protein from Methanocaldococcus jannaschii (strain ATCC 43067 / DSM 2661 / JAL-1 / JCM 10045 / NBRC 100440) (Methanococcus jannaschii).